We begin with the raw amino-acid sequence, 570 residues long: Proline--tRNA ligase (570 aa).

Belongs to the class-II aminoacyl-tRNA synthetase family. ProS type 1 subfamily. As to quaternary structure, homodimer.

The protein resides in the cytoplasm. The catalysed reaction is tRNA(Pro) + L-proline + ATP = L-prolyl-tRNA(Pro) + AMP + diphosphate. Catalyzes the attachment of proline to tRNA(Pro) in a two-step reaction: proline is first activated by ATP to form Pro-AMP and then transferred to the acceptor end of tRNA(Pro). As ProRS can inadvertently accommodate and process non-cognate amino acids such as alanine and cysteine, to avoid such errors it has two additional distinct editing activities against alanine. One activity is designated as 'pretransfer' editing and involves the tRNA(Pro)-independent hydrolysis of activated Ala-AMP. The other activity is designated 'posttransfer' editing and involves deacylation of mischarged Ala-tRNA(Pro). The misacylated Cys-tRNA(Pro) is not edited by ProRS. The polypeptide is Proline--tRNA ligase (Neisseria meningitidis serogroup A / serotype 4A (strain DSM 15465 / Z2491)).